We begin with the raw amino-acid sequence, 224 residues long: Ribose-5-phosphate isomerase A 1 (224 aa).

Substrate contacts are provided by residues 29 to 32, 85 to 88, and 98 to 101; these read SGST, DGAD, and KGGG. Glu-107 functions as the Proton acceptor in the catalytic mechanism. Lys-125 is a substrate binding site.

It belongs to the ribose 5-phosphate isomerase family. As to quaternary structure, homodimer.

It carries out the reaction aldehydo-D-ribose 5-phosphate = D-ribulose 5-phosphate. Its pathway is carbohydrate degradation; pentose phosphate pathway; D-ribose 5-phosphate from D-ribulose 5-phosphate (non-oxidative stage): step 1/1. In terms of biological role, catalyzes the reversible conversion of ribose-5-phosphate to ribulose 5-phosphate. This chain is Ribose-5-phosphate isomerase A 1, found in Oceanobacillus iheyensis (strain DSM 14371 / CIP 107618 / JCM 11309 / KCTC 3954 / HTE831).